The sequence spans 234 residues: Sugar fermentation stimulation protein homolog (234 aa).

This sequence belongs to the SfsA family.

The sequence is that of Sugar fermentation stimulation protein homolog from Shewanella putrefaciens (strain CN-32 / ATCC BAA-453).